The primary structure comprises 406 residues: Phosphorylase b kinase gamma catalytic chain, liver/testis isoform (406 aa).

The 268-residue stretch at 24–291 (YDPKDVIGRG…AEQALQHPFF (268 aa)) folds into the Protein kinase domain. Residues 30–38 (IGRGVSSVV) and Lys53 contribute to the ATP site. Asp153 functions as the Proton acceptor in the catalytic mechanism. Residues 306-330 (QRFRVAVWTVLAAGRVALSAHRIRP) are calmodulin-binding (domain-N). The interval 346 to 370 (VRRLIDNCAFRLYGHWVKKGEQQNR) is calmodulin-binding (domain-C).

It belongs to the protein kinase superfamily. CAMK Ser/Thr protein kinase family. In terms of assembly, hexadecamer of 4 heterotetramers, each composed of alpha, beta, gamma, and delta subunits. Alpha (PHKA1 or PHKA2) and beta (PHKB) are regulatory subunits, gamma (PHKG1 or PHKG2) is the catalytic subunit, and delta is calmodulin.

It catalyses the reaction 2 ATP + phosphorylase b = 2 ADP + phosphorylase a.. In terms of biological role, catalytic subunit of the phosphorylase b kinase (PHK), which mediates the neural and hormonal regulation of glycogen breakdown (glycogenolysis) by phosphorylating and thereby activating glycogen phosphorylase. May regulate glycogeneolysis in the testis. In vitro, phosphorylates PYGM. The protein is Phosphorylase b kinase gamma catalytic chain, liver/testis isoform (PHKG2) of Bos taurus (Bovine).